The following is a 470-amino-acid chain: ATP synthase subunit beta (470 aa).

Residue 148-155 (GGAGVGKT) coordinates ATP.

This sequence belongs to the ATPase alpha/beta chains family. As to quaternary structure, F-type ATPases have 2 components, CF(1) - the catalytic core - and CF(0) - the membrane proton channel. CF(1) has five subunits: alpha(3), beta(3), gamma(1), delta(1), epsilon(1). CF(0) has three main subunits: a(1), b(2) and c(9-12). The alpha and beta chains form an alternating ring which encloses part of the gamma chain. CF(1) is attached to CF(0) by a central stalk formed by the gamma and epsilon chains, while a peripheral stalk is formed by the delta and b chains.

It localises to the cell inner membrane. The enzyme catalyses ATP + H2O + 4 H(+)(in) = ADP + phosphate + 5 H(+)(out). Functionally, produces ATP from ADP in the presence of a proton gradient across the membrane. The catalytic sites are hosted primarily by the beta subunits. The protein is ATP synthase subunit beta of Teredinibacter turnerae (strain ATCC 39867 / T7901).